Reading from the N-terminus, the 142-residue chain is 3-hydroxyacyl-[acyl-carrier-protein] dehydratase FabZ (142 aa).

The active site involves histidine 47.

The protein belongs to the thioester dehydratase family. FabZ subfamily.

It is found in the cytoplasm. It carries out the reaction a (3R)-hydroxyacyl-[ACP] = a (2E)-enoyl-[ACP] + H2O. In terms of biological role, involved in unsaturated fatty acids biosynthesis. Catalyzes the dehydration of short chain beta-hydroxyacyl-ACPs and long chain saturated and unsaturated beta-hydroxyacyl-ACPs. This Thermoanaerobacter sp. (strain X514) protein is 3-hydroxyacyl-[acyl-carrier-protein] dehydratase FabZ.